Here is a 128-residue protein sequence, read N- to C-terminus: MQKRVRNRLITIIICFCSAALGISIVLYNLEKNIVFFLPPSKINEIEQGKELRVGGLVKIDSINKIAADKISFVITDNIRDLEILYQGVLPALFREGQGIIAIGQLSDGKFIARQLLAKHDENYRPPS.

Residues 1–8 are Cytoplasmic-facing; the sequence is MQKRVRNR. The helical; Signal-anchor for type II membrane protein transmembrane segment at 9 to 29 threads the bilayer; sequence LITIIICFCSAALGISIVLYN. The Periplasmic portion of the chain corresponds to 30–128; it reads LEKNIVFFLP…KHDENYRPPS (99 aa). His120 and Tyr124 together coordinate heme.

This sequence belongs to the CcmE/CycJ family.

Its subcellular location is the cell inner membrane. Its function is as follows. Heme chaperone required for the biogenesis of c-type cytochromes. Transiently binds heme delivered by CcmC and transfers the heme to apo-cytochromes in a process facilitated by CcmF and CcmH. The sequence is that of Cytochrome c-type biogenesis protein CcmE from Rickettsia felis (strain ATCC VR-1525 / URRWXCal2) (Rickettsia azadi).